The following is a 943-amino-acid chain: Protein translocase subunit SecA (943 aa).

Residues glutamine 90, 108 to 112, and aspartate 509 contribute to the ATP site; that span reads GEGKT. Residues 535-564 form a disordered region; that stretch reads PDNEHKPPIPKQRNSKSKGGFSKKASSKLK.

It belongs to the SecA family. Monomer and homodimer. Part of the essential Sec protein translocation apparatus which comprises SecA, SecYEG and auxiliary proteins SecDF. Other proteins may also be involved.

The protein resides in the cell inner membrane. The protein localises to the cellular thylakoid membrane. Its subcellular location is the cytoplasm. The enzyme catalyses ATP + H2O + cellular proteinSide 1 = ADP + phosphate + cellular proteinSide 2.. Its function is as follows. Part of the Sec protein translocase complex. Interacts with the SecYEG preprotein conducting channel. Has a central role in coupling the hydrolysis of ATP to the transfer of proteins into and across the cell membrane, serving as an ATP-driven molecular motor driving the stepwise translocation of polypeptide chains across the membrane. Functionally, probably participates in protein translocation into and across both the cytoplasmic and thylakoid membranes in cyanobacterial cells. This Prochlorococcus marinus (strain MIT 9215) protein is Protein translocase subunit SecA.